Here is a 265-residue protein sequence, read N- to C-terminus: Mlc titration factor A (265 aa).

Zn(2+) is bound by residues H111, H148, H152, and E211.

Belongs to the MtfA family. In terms of assembly, interacts with Mlc with high affinity. Zn(2+) is required as a cofactor.

It localises to the cytoplasm. Proteolytic activity is stimulated by interaction with Mlc. Addition of the chelators EDTA or phenanthroline significantly reduces the peptidase activity, whereas the addition of other protease inhibitors has much less effect. Its function is as follows. Involved in the modulation of the activity of the glucose-phosphotransferase system (glucose-PTS). Interacts with the transcriptional repressor Mlc, preventing its interaction with DNA and leading to the modulation of expression of genes regulated by Mlc, including ptsG, which encodes the PTS system glucose-specific EIICB component. Functionally, shows zinc-dependent metallopeptidase activity. In vitro, can cleave several artificial substrates. The greatest activity and specificity is observed for L-alanine fused to 4-nitroanilide (L-alanine-pNA). Shows significantly lower activity towards L-arginine-pNA, L-proline-pNA, hippuryl-L-phenylalanine and hippuryl-L-arginine, and cannot use FTC-casein. Mlc does not appear to be a biologically relevant peptidase substrate. Biologically relevant targets may have a function in growth transition under changing environmental conditions. The protein is Mlc titration factor A of Escherichia coli (strain K12).